The following is a 292-amino-acid chain: Ribosomal protein L11 methyltransferase (292 aa).

Positions 143, 164, 186, and 228 each coordinate S-adenosyl-L-methionine.

Belongs to the methyltransferase superfamily. PrmA family.

The protein localises to the cytoplasm. The catalysed reaction is L-lysyl-[protein] + 3 S-adenosyl-L-methionine = N(6),N(6),N(6)-trimethyl-L-lysyl-[protein] + 3 S-adenosyl-L-homocysteine + 3 H(+). Functionally, methylates ribosomal protein L11. The chain is Ribosomal protein L11 methyltransferase from Aeromonas hydrophila subsp. hydrophila (strain ATCC 7966 / DSM 30187 / BCRC 13018 / CCUG 14551 / JCM 1027 / KCTC 2358 / NCIMB 9240 / NCTC 8049).